Reading from the N-terminus, the 150-residue chain is Nucleoside diphosphate kinase (150 aa).

ATP-binding residues include lysine 9, phenylalanine 57, arginine 85, threonine 91, arginine 102, and asparagine 112. Histidine 115 serves as the catalytic Pros-phosphohistidine intermediate.

This sequence belongs to the NDK family. The cofactor is Mg(2+).

Its subcellular location is the cytoplasm. It carries out the reaction a 2'-deoxyribonucleoside 5'-diphosphate + ATP = a 2'-deoxyribonucleoside 5'-triphosphate + ADP. It catalyses the reaction a ribonucleoside 5'-diphosphate + ATP = a ribonucleoside 5'-triphosphate + ADP. Its function is as follows. Major role in the synthesis of nucleoside triphosphates other than ATP. The ATP gamma phosphate is transferred to the NDP beta phosphate via a ping-pong mechanism, using a phosphorylated active-site intermediate. This Methanothermobacter thermautotrophicus (strain ATCC 29096 / DSM 1053 / JCM 10044 / NBRC 100330 / Delta H) (Methanobacterium thermoautotrophicum) protein is Nucleoside diphosphate kinase.